The sequence spans 241 residues: 1-(5-phosphoribosyl)-5-[(5-phosphoribosylamino)methylideneamino] imidazole-4-carboxamide isomerase (241 aa).

D8 serves as the catalytic Proton acceptor. The active-site Proton donor is D129.

Belongs to the HisA/HisF family.

Its subcellular location is the cytoplasm. The enzyme catalyses 1-(5-phospho-beta-D-ribosyl)-5-[(5-phospho-beta-D-ribosylamino)methylideneamino]imidazole-4-carboxamide = 5-[(5-phospho-1-deoxy-D-ribulos-1-ylimino)methylamino]-1-(5-phospho-beta-D-ribosyl)imidazole-4-carboxamide. It participates in amino-acid biosynthesis; L-histidine biosynthesis; L-histidine from 5-phospho-alpha-D-ribose 1-diphosphate: step 4/9. The sequence is that of 1-(5-phosphoribosyl)-5-[(5-phosphoribosylamino)methylideneamino] imidazole-4-carboxamide isomerase from Caulobacter sp. (strain K31).